The sequence spans 553 residues: Chaperonin GroEL 2 (553 aa).

Residues 29–32 (TLGP), 86–90 (DGTTT), Gly414, and Asp495 contribute to the ATP site.

Belongs to the chaperonin (HSP60) family. In terms of assembly, forms a cylinder of 14 subunits composed of two heptameric rings stacked back-to-back. Interacts with the co-chaperonin GroES.

It localises to the cytoplasm. The enzyme catalyses ATP + H2O + a folded polypeptide = ADP + phosphate + an unfolded polypeptide.. Its function is as follows. Together with its co-chaperonin GroES, plays an essential role in assisting protein folding. The GroEL-GroES system forms a nano-cage that allows encapsulation of the non-native substrate proteins and provides a physical environment optimized to promote and accelerate protein folding. In Gloeobacter violaceus (strain ATCC 29082 / PCC 7421), this protein is Chaperonin GroEL 2.